Consider the following 1288-residue polypeptide: Symplekin (1288 aa).

Residues 1 to 124 form an interaction with HSF1 region; that stretch reads MASSSGDSVT…NMLLRDENVN (124 aa). A Phosphoserine modification is found at S13. HEAT repeat units lie at residues 31–64, 67–101, 104–146, 153–192, and 227–266; these read TTSERVVDLLNQAALITNDSKITVLKQVQELIIN, PTLLDNFLDEIIAFQADKSIEVRKFVIGFIEEACK, IELL…WMVK, LQEACWDMVSSMAGEIILLLDSDNDGIRTHAIKFVEGLIV, and VLWEEGKAAVEQLLKFMVHPAISSINLTTALGSLANIARQ. Positions 335 to 392 are disordered; sequence IARNMPSSKDSRKRPRDDTDSTLKKMKLEPNLGEDDEDKDLEPGPSGTSKASAQISGQ. The Nuclear localization signal motif lies at 345–360; it reads SRKRPRDDTDSTLKKM. Over residues 349–362 the composition is skewed to basic and acidic residues; the sequence is PRDDTDSTLKKMKL. K361 participates in a covalent cross-link: Glycyl lysine isopeptide (Lys-Gly) (interchain with G-Cter in SUMO1); alternate. Residue K361 forms a Glycyl lysine isopeptide (Lys-Gly) (interchain with G-Cter in SUMO2); alternate linkage. Positions 380–392 are enriched in polar residues; that stretch reads SGTSKASAQISGQ. Residue K483 forms a Glycyl lysine isopeptide (Lys-Gly) (interchain with G-Cter in SUMO2) linkage. S494 carries the post-translational modification Phosphoserine. Disordered regions lie at residues 1130-1151 and 1163-1288; these read PAPAPAPAPAPAPAPAPRPPQD and LKRQ…KGNS. The segment covering 1131–1149 has biased composition (pro residues); sequence APAPAPAPAPAPAPAPRPP. A compositionally biased stretch (basic and acidic residues) spans 1163–1173; that stretch reads LKRQLEEEQKQ. A phosphoserine mark is found at S1238 and S1239. A Glycyl lysine isopeptide (Lys-Gly) (interchain with G-Cter in SUMO1) cross-link involves residue K1256. S1260 bears the Phosphoserine mark. Basic and acidic residues predominate over residues 1267–1288; that stretch reads AVEEALKTSSPETREPESKGNS. Phosphothreonine is present on T1274. S1276 carries the post-translational modification Phosphoserine.

The protein belongs to the Symplekin family. Found in a heat-sensitive complex at least composed of several cleavage and polyadenylation specific and cleavage stimulation factors. Interacts with CPSF2, CPSF3 and CSTF2. Interacts (via N-terminus) with HSF1; this interaction is direct and occurs upon heat shock. Interacts with SSU72.

It localises to the cytoplasm. The protein localises to the cytoskeleton. It is found in the cell junction. Its subcellular location is the tight junction. The protein resides in the cell membrane. It localises to the nucleus. The protein localises to the nucleoplasm. Its function is as follows. Scaffold protein that functions as a component of a multimolecular complex involved in histone mRNA 3'-end processing. Specific component of the tight junction (TJ) plaque, but might not be an exclusively junctional component. May have a house-keeping rule. Is involved in pre-mRNA polyadenylation. Enhances SSU72 phosphatase activity. This Mus musculus (Mouse) protein is Symplekin (Sympk).